The primary structure comprises 472 residues: Threonine synthase-like 2 (472 aa).

Residue K113 is modified to N6-(pyridoxal phosphate)lysine.

The protein belongs to the threonine synthase family. Pyridoxal 5'-phosphate serves as cofactor.

Functionally, acts as a catabolic phospho-lyase on both gamma- and beta-phosphorylated substrates. Degrades O-phospho-threonine (PThr) to alpha-ketobutyrate, ammonia and phosphate. In Xenopus laevis (African clawed frog), this protein is Threonine synthase-like 2 (thnsl2).